The following is a 377-amino-acid chain: uncharacterized protein (377 aa).

The next 2 helical transmembrane spans lie at 71–91 and 140–160; these read IIAT…LVGS and AEAA…PTLF.

The protein localises to the membrane. This is an uncharacterized protein from Coxiella burnetii (strain RSA 493 / Nine Mile phase I).